Here is a 234-residue protein sequence, read N- to C-terminus: Ribose-5-phosphate isomerase A (234 aa).

Substrate is bound by residues 28–31 (TGST), 83–86 (DGAD), and 96–99 (KGGG). E105 (proton acceptor) is an active-site residue. Substrate is bound at residue K123.

The protein belongs to the ribose 5-phosphate isomerase family. Homodimer.

The enzyme catalyses aldehydo-D-ribose 5-phosphate = D-ribulose 5-phosphate. It functions in the pathway carbohydrate degradation; pentose phosphate pathway; D-ribose 5-phosphate from D-ribulose 5-phosphate (non-oxidative stage): step 1/1. Catalyzes the reversible conversion of ribose-5-phosphate to ribulose 5-phosphate. This chain is Ribose-5-phosphate isomerase A, found in Bartonella quintana (strain Toulouse) (Rochalimaea quintana).